Reading from the N-terminus, the 37-residue chain is Alpha-conotoxin TxID (37 aa).

A propeptide spanning residues 1–21 (FDGRNAAGNDKMSALMALTTR) is cleaved from the precursor. Disulfide bonds link Cys-23–Cys-29 and Cys-24–Cys-36. Cys-36 is modified (cysteine amide).

This sequence belongs to the conotoxin A superfamily. In terms of processing, unmodified Met-32 is essential for toxin binding to rat alpha-3-beta-4/CHRNA3-CHRNB4 nAChR. An oxidation of this methionine provokes a 13.3-fold decrease in inhibitory potency (IC(50)=245 nM instead of 18 nM). Owing to its potent activity, derivatives of this toxin have a potential in the development of a novel drug. Unfortunately, the oxidation of the methionine is readily to happen during toxin synthesis and oxidation steps as well as under oxidative environment in vivo, which should still be considered to find a solution to this major drawback. In terms of tissue distribution, expressed by the venom duct.

It localises to the secreted. Alpha-conotoxins act on postsynaptic membranes, they bind to the nicotinic acetylcholine receptors (nAChR) and thus inhibit them. This toxin inhibits alpha-3-beta-4/CHRNA3-CHRNB4 (IC(50)=3.6-18.38 nM), alpha-6/alpha-3-beta-4 (CHRNA6/CHRNA3-CHRNB4) (IC(50)=33.9-94.1 nM), and alpha-2-beta-4/CHRNA2-CHRNB4 (IC(50)=4550 nM) nAChRs. The toxin competes with agonists in the orthosteric binding site of alpha-3-beta-4/CHRNA3-CHRNB4 and alpha-6-beta-4/CHRNA6-CHRNB4. This is Alpha-conotoxin TxID from Conus textile (Cloth-of-gold cone).